Consider the following 1229-residue polypeptide: ABC transporter B family member 22 (1229 aa).

Transmembrane regions (helical) follow at residues 22–42 (MGLGLIGAVGDGFITPIIFFI), 69–89 (VALLYVAGASLVICFVEGYCW), 145–167 (LPNFLMSASAFVASYIVGFIMLW), 171–193 (IVGFPFFILLLIPGLMCGRALIN), 251–271 (GIAIGSNGVTYAIWGFMTWYG), and 274–294 (MVMYHGAKGGTIFAVIICITY). One can recognise an ABC transmembrane type-1 1 domain in the interval 22 to 311 (MGLGLIGAVG…GLSNLKYFSE (290 aa)). Residues 346–582 (VQFKHVKFMY…VDGQYTSLVR (237 aa)) enclose the ABC transporter 1 domain. 381–388 (GGSGSGKS) contacts ATP. Asn-529 and Asn-594 each carry an N-linked (GlcNAc...) asparagine glycan. A run of 2 helical transmembrane segments spans residues 661–681 (ALYGCLSAVLYGALHPIYAYA) and 703–723 (IYVLLFVGLAVLCFLISIIQQ). The 289-residue stretch at 661–949 (ALYGCLSAVL…AGAMTMDLAK (289 aa)) folds into the ABC transmembrane type-1 2 domain. An N-linked (GlcNAc...) asparagine glycan is attached at Asn-758. Transmembrane regions (helical) follow at residues 782–800 (VSLLVQTISAVSVACTLGL), 807–823 (SIVMIAIQPVVVGCFYT), 885–908 (WLAGIVLATSRSLMTCTSALNYWY), and 923–943 (FFELFILFVSTGRVIADAGAM). Residues 984-1222 (IKFVNVDFAY…GPTGVYFSLV (239 aa)) form the ABC transporter 2 domain. An N-linked (GlcNAc...) asparagine glycan is attached at Asn-1004. 1019–1026 (GPSGSGKS) serves as a coordination point for ATP. N-linked (GlcNAc...) asparagine glycosylation is present at Asn-1157.

It belongs to the ABC transporter superfamily. ABCB family. Multidrug resistance exporter (TC 3.A.1.201) subfamily.

It localises to the membrane. The polypeptide is ABC transporter B family member 22 (ABCB22) (Arabidopsis thaliana (Mouse-ear cress)).